A 295-amino-acid polypeptide reads, in one-letter code: Cop9 signalosome-interactor 1 (295 aa).

As to quaternary structure, component of a COP9 signalosome-like (CSN) complex, composed of RRI1/CSN5, CSN9, RRI2/CSN10, PCI8/CSN11, CSN12 and CSI1. In the complex, it probably interacts directly with CSN9 and CSN12. Interacts also with RPN5.

The protein resides in the cytoplasm. It localises to the nucleus. Its function is as follows. Component of the COP9 signalosome (CSN) complex that acts as an regulator of the ubiquitin (Ubl) conjugation pathway by mediating the deneddylation of the cullin subunit of SCF-type E3 ubiquitin-protein ligase complexes The CSN complex is involved in the regulation of the mating pheromone response. This is Cop9 signalosome-interactor 1 (CSI1) from Saccharomyces cerevisiae (strain ATCC 204508 / S288c) (Baker's yeast).